We begin with the raw amino-acid sequence, 290 residues long: BEL1-like homeodomain protein 11 (290 aa).

The segment at 20-36 (SRYAKAVQCLVEEVIDI) is SR/KY domain. Residues 81–152 (ENHEIHIKIT…SLEEAIISQL (72 aa)) form a BELL domain region. Residues 202–264 (AWKPIRGLPE…NARVRLWKPM (63 aa)) constitute a DNA-binding region (homeobox).

It belongs to the TALE/BELL homeobox family. As to quaternary structure, may form heterodimeric complexes with TALE/KNOX proteins.

The protein resides in the nucleus. The protein is BEL1-like homeodomain protein 11 (BLH11) of Arabidopsis thaliana (Mouse-ear cress).